A 309-amino-acid polypeptide reads, in one-letter code: MAAAGAPDGMEEPGMDTEAETVATEAPARPVNCLEAEAAAGAAAEDSGAARGSLQPAPAQPPGDPAAQASVSNGEDAGGGAGRELVDLKIIWNKTKHDVKFPLDSTGSELKQKIHSITGLPPAMQKVMYKGLVPEDKTLREIKVTSGAKIMVVGSTINDVLAVNTPKDAAQQDAKAEENKKEPLCRQKQHRKVLDKGKPEDVMPSVKGAQERLPTVPLSGMYNKSGGKVRLTFKLEQDQLWIGTKERTEKLPMGSIKNVVSEPIEGHEDYHMMAFQLGPTEASYYWVYWVPTQYVDAIKDTVLGKWQYF.

Residues 1–80 (MAAAGAPDGM…VSNGEDAGGG (80 aa)) are disordered. A compositionally biased stretch (acidic residues) spans 9–19 (GMEEPGMDTEA). Positions 35–57 (EAEAAAGAAAEDSGAARGSLQPA) are enriched in low complexity. In terms of domain architecture, Ubiquitin-like spans 84–159 (ELVDLKIIWN…IMVVGSTIND (76 aa)). A disordered region spans residues 171-204 (QQDAKAEENKKEPLCRQKQHRKVLDKGKPEDVMP). 2 stretches are compositionally biased toward basic and acidic residues: residues 174–185 (AKAEENKKEPLC) and 192–201 (KVLDKGKPED).

Binds polyubiquitin.

Functionally, may play a role as NF-kappa-B regulator. This is Ubiquitin domain-containing protein UBFD1 (UBFD1) from Homo sapiens (Human).